Here is a 140-residue protein sequence, read N- to C-terminus: Large ribosomal subunit protein uL16 (140 aa).

Residues 1 to 14 (MLMPKKVKHRKQMK) are compositionally biased toward basic residues. Residues 1–20 (MLMPKKVKHRKQMKGRMSGT) form a disordered region.

Belongs to the universal ribosomal protein uL16 family. As to quaternary structure, part of the 50S ribosomal subunit.

In terms of biological role, binds 23S rRNA and is also seen to make contacts with the A and possibly P site tRNAs. The chain is Large ribosomal subunit protein uL16 from Geotalea daltonii (strain DSM 22248 / JCM 15807 / FRC-32) (Geobacter daltonii).